Here is a 660-residue protein sequence, read N- to C-terminus: Pescadillo homolog (660 aa).

2 disordered regions span residues 313-358 (VESD…SYSS) and 471-660 (PELY…EKKA). The segment covering 331–342 (EEKPSDAIDKFE) has biased composition (basic and acidic residues). Residues 360 to 476 (DPAQLFSRLT…ELKSPELYGP (117 aa)) form the BRCT domain. Residues 501-659 (LEEQQSEGEA…KRRRLEKEKK (159 aa)) are a coiled coil. A compositionally biased stretch (acidic residues) spans 504-566 (QQSEGEAIDA…EEGSEDEEES (63 aa)). Residues 584 to 619 (VKGDKKMDAKTKAKLEAKKALERKKKSEAEDLERAK) show a composition bias toward basic and acidic residues.

This sequence belongs to the pescadillo family. In terms of assembly, component of the NOP7 complex, composed of ERB1, NOP7 and YTM1. The complex is held together by ERB1, which interacts with NOP7 via its N-terminal domain and with YTM1 via a high-affinity interaction between the seven-bladed beta-propeller domains of the 2 proteins. The NOP7 complex associates with the 66S pre-ribosome.

It localises to the nucleus. It is found in the nucleolus. The protein localises to the nucleoplasm. Functionally, component of the NOP7 complex, which is required for maturation of the 25S and 5.8S ribosomal RNAs and formation of the 60S ribosome. The sequence is that of Pescadillo homolog from Chaetomium globosum (strain ATCC 6205 / CBS 148.51 / DSM 1962 / NBRC 6347 / NRRL 1970) (Soil fungus).